The sequence spans 390 residues: Lipid-A-disaccharide synthase (390 aa).

Belongs to the LpxB family.

The enzyme catalyses a lipid X + a UDP-2-N,3-O-bis[(3R)-3-hydroxyacyl]-alpha-D-glucosamine = a lipid A disaccharide + UDP + H(+). Its pathway is bacterial outer membrane biogenesis; LPS lipid A biosynthesis. Its function is as follows. Condensation of UDP-2,3-diacylglucosamine and 2,3-diacylglucosamine-1-phosphate to form lipid A disaccharide, a precursor of lipid A, a phosphorylated glycolipid that anchors the lipopolysaccharide to the outer membrane of the cell. This Haemophilus ducreyi (strain 35000HP / ATCC 700724) protein is Lipid-A-disaccharide synthase.